We begin with the raw amino-acid sequence, 143 residues long: Large ribosomal subunit protein uL11 (143 aa).

Belongs to the universal ribosomal protein uL11 family. As to quaternary structure, part of the ribosomal stalk of the 50S ribosomal subunit. Interacts with L10 and the large rRNA to form the base of the stalk. L10 forms an elongated spine to which L12 dimers bind in a sequential fashion forming a multimeric L10(L12)X complex. In terms of processing, one or more lysine residues are methylated.

Forms part of the ribosomal stalk which helps the ribosome interact with GTP-bound translation factors. The sequence is that of Large ribosomal subunit protein uL11 from Verminephrobacter eiseniae (strain EF01-2).